The chain runs to 255 residues: Large ribosomal subunit protein uL2 (255 aa).

The segment at 211-235 (PHGGGNHQHVGHATTTKRDDPAGKK) is disordered.

The protein belongs to the universal ribosomal protein uL2 family.

This Dictyostelium discoideum (Social amoeba) protein is Large ribosomal subunit protein uL2 (rpl8).